The chain runs to 952 residues: Disintegrin and metalloproteinase domain-containing protein adm-2 (952 aa).

Residues 1–672 lie on the Extracellular side of the membrane; that stretch reads MTDTLDLKLS…NEAYRFRGIT (672 aa). N-linked (GlcNAc...) asparagine glycans are attached at residues asparagine 125 and asparagine 301. A Peptidase M12B domain is found at 177-373; that stretch reads RFVELALVAD…GIDLCLFNEP (197 aa). 3 disulfide bridges follow: cysteine 287–cysteine 368, cysteine 330–cysteine 352, and cysteine 332–cysteine 337. Position 312 (histidine 312) interacts with Zn(2+). Residue glutamate 313 is part of the active site. 2 residues coordinate Zn(2+): histidine 316 and histidine 322. The Disintegrin domain occupies 379 to 466; that stretch reads DAKCGNGIVE…DCPADFFVQN (88 aa). Asparagine 406 carries N-linked (GlcNAc...) asparagine glycosylation. Cystine bridges form between cysteine 438/cysteine 458, cysteine 624/cysteine 634, cysteine 628/cysteine 640, and cysteine 642/cysteine 651. An EGF-like domain is found at 620 to 652; sequence VTAQCLDNCNFRGVCNNVGNCHCERGFGGIACE. A helical membrane pass occupies residues 673–693; that stretch reads LSSTFLVFFCLFGIFIGGLCV. Residues 694–952 lie on the Cytoplasmic side of the membrane; sequence YYRVKRKRNL…AAIFDQKLKK (259 aa). 2 disordered regions span residues 778 to 809 and 829 to 938; these read IPMVTLKNPNLASPTPLLNPAEKEEQNQERAT and SFNT…EKVD. Basic and acidic residues-rich tracts occupy residues 798 to 809 and 849 to 873; these read AEKEEQNQERAT and PSDDVLSKLNEDLAKEKNAKFDRLN. Residues 905–914 are compositionally biased toward pro residues; sequence QAPPPPPPAH. Over residues 925-938 the composition is skewed to basic and acidic residues; the sequence is KVSEDAAATEEKVD.

Requires Zn(2+) as cofactor. As to expression, expressed in hyp7 large epidermal syncytium (punctate distribution), seam cell syncytia, anterior epidermis, neurons located in the head, tail and central body, proximal oogenic cells (levels increasing in maturing oocytes) and myoepithelial cells of the spermatheca (at protein level). Not detected in mature sperm cells.

Its subcellular location is the cell membrane. The protein resides in the endosome membrane. It is found in the lysosome membrane. Functionally, metalloprotease that cleaves and releases a number of molecules. Negative regulator of lrp-1 protein levels, potentially by influencing its endosomal trafficking. Involved in regulating the molting process. This chain is Disintegrin and metalloproteinase domain-containing protein adm-2, found in Caenorhabditis elegans.